An 89-amino-acid chain; its full sequence is Bombyxin B-2 (89 aa).

A signal peptide spans Met1–Ser19. Intrachain disulfides connect Cys29–Cys75, Cys41–Cys88, and Cys74–Cys79. The propeptide at Ser48–Gly66 is c peptide like.

The protein belongs to the insulin family. In terms of assembly, heterodimer of a B chain and an A chain linked by two disulfide bonds.

Its subcellular location is the secreted. Functionally, brain peptide responsible for activation of prothoracic glands to produce ecdysone in insects. This is Bombyxin B-2 (BBXB2) from Bombyx mori (Silk moth).